The following is a 406-amino-acid chain: MKAVIFVIDGLGDRPDEFGNTPLKEANTHTMDKIAKEGICGIMNAIDIGVRPGSDTAHLALLGYDPYETYTGRGPFEACGVGITVKPGDIAFRCNFSSVDKEFIVTDRRAGRIEDTSLLEKELDGLKIDDVEVIFKESGGYRAALLLRGPNLSDKISDADPKKEGKKVKEIIPLDDSKEAEKTANILNRLLKVAYEKLDGHPVNQKRRTNNLPVANMIIPRGVGKVPEIIPFDKKYGLKGACIAGTGLIKGIAKMVNLDVIEVKGATGTPDSNFMAKAKALVETLKTHDFVLINVKGADEAGHDGNYEVKKQVIEKIDEMLTYIMENIDRKDVYFVLTGDHSTPIEEMDHSADPLPIVIWGKSVRVDDVEKFDEFSTCKGGLNWIKGKNIMPILIDLMGLSKKYGA.

The protein belongs to the BPG-independent phosphoglycerate mutase family. A-PGAM subfamily.

It catalyses the reaction (2R)-2-phosphoglycerate = (2R)-3-phosphoglycerate. The protein operates within carbohydrate degradation; glycolysis; pyruvate from D-glyceraldehyde 3-phosphate: step 3/5. Functionally, catalyzes the interconversion of 2-phosphoglycerate and 3-phosphoglycerate. In Methanococcus vannielii (strain ATCC 35089 / DSM 1224 / JCM 13029 / OCM 148 / SB), this protein is 2,3-bisphosphoglycerate-independent phosphoglycerate mutase.